The primary structure comprises 378 residues: UPF0754 membrane protein BcerKBAB4_0766 (378 aa).

A run of 2 helical transmembrane segments spans residues Met-1–Thr-21 and Tyr-357–Leu-377.

This sequence belongs to the UPF0754 family.

The protein resides in the cell membrane. This Bacillus mycoides (strain KBAB4) (Bacillus weihenstephanensis) protein is UPF0754 membrane protein BcerKBAB4_0766.